A 200-amino-acid polypeptide reads, in one-letter code: MLRYLGPKLKKLKRLNIHMQPEFSTKYFILNTNKYNNKMILSFYLLELFEKQKLKFTFSLSEKIIKKYILFMHKYNYKKFNLINIIEIRLDNTIFNLGYSITIAQAKQLIIHGYFFVNFKLIKIPSFLLKKGDIITLSPKSYYIFKLCKKNLYKKYIKNSNIYDTIYICKNTLISIIYSILNIYNNNNYNNILIMKYYSY.

The S4 RNA-binding domain occupies 88–148; the sequence is IRLDNTIFNL…PKSYYIFKLC (61 aa).

This sequence belongs to the universal ribosomal protein uS4 family. In terms of assembly, part of the 30S ribosomal subunit.

It is found in the plastid. Its subcellular location is the apicoplast. Functionally, one of the primary rRNA binding proteins, it binds directly to 16S rRNA where it nucleates assembly of the body of the 30S subunit. The sequence is that of Small ribosomal subunit protein uS4c (rps4) from Eimeria tenella (Coccidian parasite).